Reading from the N-terminus, the 290-residue chain is Lipid phosphate phosphatase 2 (290 aa).

3 helical membrane-spanning segments follow: residues 26-46, 69-89, and 93-113; these read WLILLLLIVIEIVLNVIEPFH, WAVPLIAVVLPFAVICVYYFI, and VYDLHHAILGLLFSVLITGVI. Residue Asn-142 is glycosylated (N-linked (GlcNAc...) asparagine). Transmembrane regions (helical) follow at residues 162-182, 193-213, and 226-246; these read SFPSGHTSWSFAGLGFLSLYL, GHVAKLCIVILPLLVAALVGV, and VFGGAIIGLTVATFCYLQFFP.

The protein belongs to the PA-phosphatase related phosphoesterase family. In terms of tissue distribution, expressed in roots, stems, leaves, buds, flowers and siliques.

Its subcellular location is the membrane. With respect to regulation, PA phosphatase activity not inhibited by N-ethylmaleimide. Its function is as follows. May play a general 'housekeeping role' in lipid metabolism. Exhibits both diacylglycerol pyrophosphate (DGPP) phosphatase and phosphatidate (PA) phosphatase activities with no preference for either substrate. May play a role downstream of the ABA signaling pathway during seed germination and in stomatal movement in leaves. The polypeptide is Lipid phosphate phosphatase 2 (LPP2) (Arabidopsis thaliana (Mouse-ear cress)).